Consider the following 206-residue polypeptide: Recombination protein RecR (206 aa).

The segment at 60-75 (CARCNTFCEGGLCDIC) adopts a C4-type zinc-finger fold. The 96-residue stretch at 83–178 (RRLMVVHMPA…KVSRLSQGIP (96 aa)) folds into the Toprim domain.

The protein belongs to the RecR family.

May play a role in DNA repair. It seems to be involved in an RecBC-independent recombinational process of DNA repair. It may act with RecF and RecO. This Neisseria gonorrhoeae (strain NCCP11945) protein is Recombination protein RecR.